A 278-amino-acid chain; its full sequence is Transmembrane protein 41B (278 aa).

Residues 1–31 form a disordered region; the sequence is MQVHERSHTGGHTCQCNHGSEKKAPATGKVH. 6 helical membrane passes run 39–59, 96–116, 132–154, 184–204, 212–232, and 249–269; these read MSLL…FLVY, FYVE…TFAI, FPLA…YLLS, LINY…FINI, PLKV…FVAI, and SWNS…PAIF. The interval 127–238 is VTT domain; required for its function in autophagy; the sequence is GFLYPFPLAL…FVAIKAGTTL (112 aa).

The protein belongs to the TMEM41 family.

The protein resides in the endoplasmic reticulum membrane. Its subcellular location is the endomembrane system. It catalyses the reaction a 1,2-diacyl-sn-glycero-3-phospho-L-serine(in) = a 1,2-diacyl-sn-glycero-3-phospho-L-serine(out). The enzyme catalyses cholesterol(in) = cholesterol(out). The catalysed reaction is a 1,2-diacyl-sn-glycero-3-phosphocholine(in) = a 1,2-diacyl-sn-glycero-3-phosphocholine(out). It carries out the reaction a 1,2-diacyl-sn-glycero-3-phosphoethanolamine(in) = a 1,2-diacyl-sn-glycero-3-phosphoethanolamine(out). Functionally, phospholipid scramblase involved in lipid homeostasis and membrane dynamics processes. Has phospholipid scramblase activity toward cholesterol and phosphatidylserine, as well as phosphatidylethanolamine and phosphatidylcholine. Required for autophagosome formation: participates in early stages of autophagosome biogenesis at the endoplasmic reticulum (ER) membrane by reequilibrating the leaflets of the ER as lipids are extracted by atg2 (atg2a or atg2b) to mediate autophagosome assembly. In addition to autophagy, involved in other processes in which phospholipid scramblase activity is required. Required for normal motor neuron development. In Xenopus tropicalis (Western clawed frog), this protein is Transmembrane protein 41B.